An 81-amino-acid chain; its full sequence is Putative snRNP Sm-like protein (81 aa).

The region spanning 13–81 (RPLDALGNSL…RGDNIVYISP (69 aa)) is the Sm domain.

The protein belongs to the snRNP Sm proteins family.

This Methanothermobacter thermautotrophicus (strain ATCC 29096 / DSM 1053 / JCM 10044 / NBRC 100330 / Delta H) (Methanobacterium thermoautotrophicum) protein is Putative snRNP Sm-like protein.